The primary structure comprises 31 residues: M-poneritoxin-Nc3b (31 aa).

This sequence belongs to the ponericin-G family. In terms of tissue distribution, expressed by the venom gland.

It localises to the secreted. Its subcellular location is the target cell membrane. Membrane-perturbating peptide with a few moderate activities. It is insecticidal, since it induces reversible paralysis in insects (L.cuprina) after 1 hour, but fails to kill them. It is also antiparasitic, since it moderately inhibits the larval development of the major pathogenic nematode of ruminants (H.contortus, IC(50)=23.2 uM) and reduces the motility of adult males of the other nematode B.malayi. It does not show antibacterial activity (MIC&gt;40 uM). It is not cytotoxic to HEK293 cells and does not induce hemolysis in human erythrocytes. It does not cause an increase in intracellular calcium concentration on neuronal and epithelial cell lines. The chain is M-poneritoxin-Nc3b from Neoponera commutata (Large hunting ant).